Reading from the N-terminus, the 674-residue chain is Probable copper-transporting P-type ATPase B (674 aa).

Residues 1–22 are disordered; that stretch reads MNHSNQMHHDNHESHNHHSGHA. A compositionally biased stretch (basic and acidic residues) spans 7–16; it reads MHHDNHESHN. 6 helical membrane passes run 32-52, 57-77, 95-115, 127-147, 284-304, and 315-335; these read FFVS…MGVN, FTFP…FFYG, GMMT…LYAF, TMDF…GHWI, GYLF…WMLI, and LVTV…PLVT. The active-site 4-aspartylphosphate intermediate is the Asp-367. Mg(2+) contacts are provided by Asp-565 and Asp-569. The next 2 helical transmembrane spans lie at 623 to 645 and 649 to 671; these read LWWG…AFIG and SPAI…AFTL.

It belongs to the cation transport ATPase (P-type) (TC 3.A.3) family. Type IB subfamily.

The protein localises to the cell membrane. It carries out the reaction Cu(+)(in) + ATP + H2O = Cu(+)(out) + ADP + phosphate + H(+). Involved in copper transport. The polypeptide is Probable copper-transporting P-type ATPase B (copB) (Staphylococcus epidermidis (strain ATCC 35984 / DSM 28319 / BCRC 17069 / CCUG 31568 / BM 3577 / RP62A)).